Here is a 312-residue protein sequence, read N- to C-terminus: Malate dehydrogenase (312 aa).

Residues glycine 7–glycine 13 and aspartate 34 contribute to the NAD(+) site. Residues arginine 81 and arginine 87 each coordinate substrate. Residues asparagine 94 and isoleucine 117–asparagine 119 each bind NAD(+). 2 residues coordinate substrate: asparagine 119 and arginine 153. Histidine 177 acts as the Proton acceptor in catalysis. Position 227 (methionine 227) interacts with NAD(+).

Belongs to the LDH/MDH superfamily. MDH type 1 family. As to quaternary structure, homodimer.

The enzyme catalyses (S)-malate + NAD(+) = oxaloacetate + NADH + H(+). Its function is as follows. Catalyzes the reversible oxidation of malate to oxaloacetate. This Shigella flexneri serotype 5b (strain 8401) protein is Malate dehydrogenase.